The chain runs to 349 residues: MSKIRVLSVDDSALMRQIMTEIINSHSDMEMVATAPDPLVARDLIKKFNPDVLTLDVEMPRMDGLDFLEKLMRLRPMPVVMVSSLTGKGSEVTLRALELGAIDFVTKPQLGIREGMLAYSEMIAEKVRTAAKASLAAHKPLSAPTTLKAGPLLSSEKLIAIGASTGGTEAIRHVLQPLPLSSPALLITQHMPPGFTRSFADRLNKLCQIGVKEAEDGERVLPGHAYIAPGDRHMELARSGANYQIKIHDGPAVNRHRPSVDVLFHSVAKQAGRNAVGVILTGMGNDGAAGMLAMRQAGAWTLAQNEASCVVFGMPREAINMGGVCEVVDLSQVSQQMLAKISAGQAIRI.

A Response regulatory domain is found at 5–122 (RVLSVDDSAL…REGMLAYSEM (118 aa)). Asp56 carries the 4-aspartylphosphate modification. A CheB-type methylesterase domain is found at 152-344 (LLSSEKLIAI…QQMLAKISAG (193 aa)). Residues Ser164, His190, and Asp286 contribute to the active site.

This sequence belongs to the CheB family. In terms of processing, phosphorylated by CheA. Phosphorylation of the N-terminal regulatory domain activates the methylesterase activity.

It localises to the cytoplasm. The catalysed reaction is [protein]-L-glutamate 5-O-methyl ester + H2O = L-glutamyl-[protein] + methanol + H(+). It catalyses the reaction L-glutaminyl-[protein] + H2O = L-glutamyl-[protein] + NH4(+). Functionally, involved in chemotaxis. Part of a chemotaxis signal transduction system that modulates chemotaxis in response to various stimuli. Catalyzes the demethylation of specific methylglutamate residues introduced into the chemoreceptors (methyl-accepting chemotaxis proteins or MCP) by CheR. Also mediates the irreversible deamidation of specific glutamine residues to glutamic acid. The sequence is that of Protein-glutamate methylesterase/protein-glutamine glutaminase from Escherichia coli O6:H1 (strain CFT073 / ATCC 700928 / UPEC).